Here is a 179-residue protein sequence, read N- to C-terminus: Archaemetzincin (179 aa).

A Zn(2+)-binding site is contributed by histidine 128. Glutamate 129 functions as the Proton acceptor in the catalytic mechanism. Positions 132, 138, 139, 144, 163, and 166 each coordinate Zn(2+).

The protein belongs to the peptidase M54 family. Monomer. The cofactor is Zn(2+).

Functionally, probable zinc metalloprotease whose natural substrate is unknown. This chain is Archaemetzincin, found in Methanocaldococcus jannaschii (strain ATCC 43067 / DSM 2661 / JAL-1 / JCM 10045 / NBRC 100440) (Methanococcus jannaschii).